Reading from the N-terminus, the 310-residue chain is Glutaminase (310 aa).

7 residues coordinate substrate: S67, N118, E161, N168, Y192, Y244, and V262.

Belongs to the glutaminase family. Homotetramer.

It catalyses the reaction L-glutamine + H2O = L-glutamate + NH4(+). The protein is Glutaminase of Legionella pneumophila subsp. pneumophila (strain Philadelphia 1 / ATCC 33152 / DSM 7513).